The sequence spans 64 residues: Large ribosomal subunit protein bL28 (64 aa).

It belongs to the bacterial ribosomal protein bL28 family.

This Mycobacterium leprae (strain TN) protein is Large ribosomal subunit protein bL28 (rpmB).